The chain runs to 1379 residues: DNA-directed RNA polymerase subunit beta (1379 aa).

This sequence belongs to the RNA polymerase beta chain family. In plastids the minimal PEP RNA polymerase catalytic core is composed of four subunits: alpha, beta, beta', and beta''. When a (nuclear-encoded) sigma factor is associated with the core the holoenzyme is formed, which can initiate transcription.

Its subcellular location is the plastid. It is found in the chloroplast. The enzyme catalyses RNA(n) + a ribonucleoside 5'-triphosphate = RNA(n+1) + diphosphate. DNA-dependent RNA polymerase catalyzes the transcription of DNA into RNA using the four ribonucleoside triphosphates as substrates. The chain is DNA-directed RNA polymerase subunit beta from Trieres chinensis (Marine centric diatom).